We begin with the raw amino-acid sequence, 64 residues long: Conotoxin Cal12.4 (64 aa).

Positions 1–21 (MKLTCMLVVLLLVLPFGDLIA) are cleaved as a signal peptide.

It belongs to the conotoxin O1 superfamily. Contains 4 disulfide bonds. In terms of tissue distribution, expressed by the venom duct.

The protein localises to the secreted. Its function is as follows. Probable neurotoxin. This Californiconus californicus (California cone) protein is Conotoxin Cal12.4.